Here is a 231-residue protein sequence, read N- to C-terminus: Large ribosomal subunit protein uL1 (231 aa).

It belongs to the universal ribosomal protein uL1 family. In terms of assembly, part of the 50S ribosomal subunit.

Binds directly to 23S rRNA. The L1 stalk is quite mobile in the ribosome, and is involved in E site tRNA release. Functionally, protein L1 is also a translational repressor protein, it controls the translation of the L11 operon by binding to its mRNA. The chain is Large ribosomal subunit protein uL1 from Cellvibrio japonicus (strain Ueda107) (Pseudomonas fluorescens subsp. cellulosa).